The primary structure comprises 338 residues: Anthranilate phosphoribosyltransferase (338 aa).

Residues G81, 84 to 85, S89, 91 to 94, 109 to 117, and A121 each bind 5-phospho-alpha-D-ribose 1-diphosphate; these read GD, NVST, and KHGNRALSS. Residue G81 coordinates anthranilate. Residue S93 coordinates Mg(2+). N112 is an anthranilate binding site. Residue R167 participates in anthranilate binding. The Mg(2+) site is built by D226 and E227.

Belongs to the anthranilate phosphoribosyltransferase family. As to quaternary structure, homodimer. Requires Mg(2+) as cofactor.

It carries out the reaction N-(5-phospho-beta-D-ribosyl)anthranilate + diphosphate = 5-phospho-alpha-D-ribose 1-diphosphate + anthranilate. Its pathway is amino-acid biosynthesis; L-tryptophan biosynthesis; L-tryptophan from chorismate: step 2/5. In terms of biological role, catalyzes the transfer of the phosphoribosyl group of 5-phosphorylribose-1-pyrophosphate (PRPP) to anthranilate to yield N-(5'-phosphoribosyl)-anthranilate (PRA). The polypeptide is Anthranilate phosphoribosyltransferase (Rhodopseudomonas palustris (strain HaA2)).